Here is a 222-residue protein sequence, read N- to C-terminus: Glycerol-3-phosphate acyltransferase (222 aa).

Helical transmembrane passes span 4-24 (ALLLCLCLLLITYLMGSIPTG), 56-76 (PAAIAVLAIDISKGVMAVALV), 87-107 (ALPAAWQNWLTLGVAIAVVLG), 130-150 (FMLNIWLALGTLATFLTVIFF), 153-173 (IVSLSSIVAAIAVNGIALALQ), and 174-191 (LPPPYLAFTFLAGMYVIV).

This sequence belongs to the PlsY family. As to quaternary structure, probably interacts with PlsX.

It localises to the cell inner membrane. The catalysed reaction is an acyl phosphate + sn-glycerol 3-phosphate = a 1-acyl-sn-glycero-3-phosphate + phosphate. Its pathway is lipid metabolism; phospholipid metabolism. In terms of biological role, catalyzes the transfer of an acyl group from acyl-phosphate (acyl-PO(4)) to glycerol-3-phosphate (G3P) to form lysophosphatidic acid (LPA). This enzyme utilizes acyl-phosphate as fatty acyl donor, but not acyl-CoA or acyl-ACP. This chain is Glycerol-3-phosphate acyltransferase, found in Synechocystis sp. (strain ATCC 27184 / PCC 6803 / Kazusa).